A 634-amino-acid chain; its full sequence is Chaperone protein HtpG (634 aa).

The a; substrate-binding stretch occupies residues 1–342 (MTVDTDKQTL…SADLSLNVSR (342 aa)). The segment at 343 to 559 (EILQSGPVVD…QGDLGLQMRQ (217 aa)) is b. The interval 560–634 (LLEASGQAVP…LNKLLLELSA (75 aa)) is c.

It belongs to the heat shock protein 90 family. Homodimer.

The protein localises to the cytoplasm. In terms of biological role, molecular chaperone. Has ATPase activity. The protein is Chaperone protein HtpG of Xanthomonas campestris pv. campestris (strain ATCC 33913 / DSM 3586 / NCPPB 528 / LMG 568 / P 25).